The chain runs to 611 residues: Dihydroxy-acid dehydratase (611 aa).

Aspartate 81 is a binding site for Mg(2+). Cysteine 122 is a [2Fe-2S] cluster binding site. Mg(2+)-binding residues include aspartate 123 and lysine 124. The residue at position 124 (lysine 124) is an N6-carboxylysine. Cysteine 195 contributes to the [2Fe-2S] cluster binding site. Glutamate 491 is a Mg(2+) binding site. Residue serine 517 is the Proton acceptor of the active site.

The protein belongs to the IlvD/Edd family. Homodimer. [2Fe-2S] cluster serves as cofactor. Requires Mg(2+) as cofactor.

It catalyses the reaction (2R)-2,3-dihydroxy-3-methylbutanoate = 3-methyl-2-oxobutanoate + H2O. It carries out the reaction (2R,3R)-2,3-dihydroxy-3-methylpentanoate = (S)-3-methyl-2-oxopentanoate + H2O. Its pathway is amino-acid biosynthesis; L-isoleucine biosynthesis; L-isoleucine from 2-oxobutanoate: step 3/4. The protein operates within amino-acid biosynthesis; L-valine biosynthesis; L-valine from pyruvate: step 3/4. Functions in the biosynthesis of branched-chain amino acids. Catalyzes the dehydration of (2R,3R)-2,3-dihydroxy-3-methylpentanoate (2,3-dihydroxy-3-methylvalerate) into 2-oxo-3-methylpentanoate (2-oxo-3-methylvalerate) and of (2R)-2,3-dihydroxy-3-methylbutanoate (2,3-dihydroxyisovalerate) into 2-oxo-3-methylbutanoate (2-oxoisovalerate), the penultimate precursor to L-isoleucine and L-valine, respectively. The polypeptide is Dihydroxy-acid dehydratase (Brucella suis (strain ATCC 23445 / NCTC 10510)).